The sequence spans 337 residues: Heat-inducible transcription repressor HrcA (337 aa).

It belongs to the HrcA family.

Its function is as follows. Negative regulator of class I heat shock genes (grpE-dnaK-dnaJ and groELS operons). Prevents heat-shock induction of these operons. The chain is Heat-inducible transcription repressor HrcA from Nocardioides sp. (strain ATCC BAA-499 / JS614).